We begin with the raw amino-acid sequence, 96 residues long: Protein E7 (96 aa).

Positions methionine 1–glutamate 37 are E7 terminal domain. Positions leucine 23 to glutamate 27 match the LXCXE motif; interaction with host RB1 and TMEM173/STING motif. The segment at cysteine 49–cysteine 86 is a zinc-finger region. Residues isoleucine 68–leucine 76 carry the Nuclear export signal motif.

Belongs to the papillomaviridae E7 protein family. Homodimer. Homooligomer. Interacts with host RB1; this interaction induces dissociation of RB1-E2F1 complex thereby disrupting RB1 activity. Interacts with host EP300; this interaction represses EP300 transcriptional activity. Interacts with protein E2; this interaction inhibits E7 oncogenic activity. Interacts with host TMEM173/STING; this interaction impairs the ability of TMEM173/STING to sense cytosolic DNA and promote the production of type I interferon (IFN-alpha and IFN-beta). In terms of processing, highly phosphorylated.

Its subcellular location is the host cytoplasm. It is found in the host nucleus. Its function is as follows. Plays a role in viral genome replication by driving entry of quiescent cells into the cell cycle. Stimulation of progression from G1 to S phase allows the virus to efficiently use the cellular DNA replicating machinery to achieve viral genome replication. E7 protein has both transforming and trans-activating activities. Induces the disassembly of the E2F1 transcription factor from RB1, with subsequent transcriptional activation of E2F1-regulated S-phase genes. Interferes with host histone deacetylation mediated by HDAC1 and HDAC2, leading to transcription activation. Also plays a role in the inhibition of both antiviral and antiproliferative functions of host interferon alpha. Interaction with host TMEM173/STING impairs the ability of TMEM173/STING to sense cytosolic DNA and promote the production of type I interferon (IFN-alpha and IFN-beta). The polypeptide is Protein E7 (Homo sapiens (Human)).